Here is a 103-residue protein sequence, read N- to C-terminus: UPF0091 protein PH0944 (103 aa).

This sequence belongs to the UPF0091 family.

This chain is UPF0091 protein PH0944, found in Pyrococcus horikoshii (strain ATCC 700860 / DSM 12428 / JCM 9974 / NBRC 100139 / OT-3).